We begin with the raw amino-acid sequence, 434 residues long: Serine hydroxymethyltransferase (434 aa).

(6S)-5,6,7,8-tetrahydrofolate is bound by residues Leu133 and 137–139 (GHL). Lys242 bears the N6-(pyridoxal phosphate)lysine mark.

It belongs to the SHMT family. In terms of assembly, homodimer. It depends on pyridoxal 5'-phosphate as a cofactor.

The protein localises to the cytoplasm. It carries out the reaction (6R)-5,10-methylene-5,6,7,8-tetrahydrofolate + glycine + H2O = (6S)-5,6,7,8-tetrahydrofolate + L-serine. It functions in the pathway one-carbon metabolism; tetrahydrofolate interconversion. Its pathway is amino-acid biosynthesis; glycine biosynthesis; glycine from L-serine: step 1/1. Its function is as follows. Catalyzes the reversible interconversion of serine and glycine with tetrahydrofolate (THF) serving as the one-carbon carrier. This reaction serves as the major source of one-carbon groups required for the biosynthesis of purines, thymidylate, methionine, and other important biomolecules. Also exhibits THF-independent aldolase activity toward beta-hydroxyamino acids, producing glycine and aldehydes, via a retro-aldol mechanism. In Caulobacter sp. (strain K31), this protein is Serine hydroxymethyltransferase.